An 82-amino-acid polypeptide reads, in one-letter code: Small ribosomal subunit protein bS16 (82 aa).

It belongs to the bacterial ribosomal protein bS16 family.

This Vibrio parahaemolyticus serotype O3:K6 (strain RIMD 2210633) protein is Small ribosomal subunit protein bS16.